The chain runs to 330 residues: Probable deoxyhypusine synthase (330 aa).

Residues 1-25 are disordered; the sequence is MTGDDADETHENVVPGSDEDLDTPD. Lysine 298 (nucleophile) is an active-site residue.

It belongs to the deoxyhypusine synthase family. It depends on NAD(+) as a cofactor.

The catalysed reaction is [eIF5A protein]-L-lysine + spermidine = [eIF5A protein]-deoxyhypusine + propane-1,3-diamine. It functions in the pathway protein modification; eIF5A hypusination. Functionally, catalyzes the NAD-dependent oxidative cleavage of spermidine and the subsequent transfer of the butylamine moiety of spermidine to the epsilon-amino group of a specific lysine residue of the eIF-5A precursor protein to form the intermediate deoxyhypusine residue. This Halobacterium salinarum (strain ATCC 29341 / DSM 671 / R1) protein is Probable deoxyhypusine synthase.